The following is a 327-amino-acid chain: Tartrate-resistant acid phosphatase type 5 (327 aa).

The signal sequence occupies residues Met1–Thr22. Asp35, Asp73, Tyr76, and Asn112 together coordinate Fe cation. N-linked (GlcNAc...) asparagine glycosylation is found at Asn118 and Asn149. Cys163 and Cys221 are disulfide-bonded. Positions 207, 242, and 244 each coordinate Fe cation.

As to quaternary structure, exists either as monomer or, after proteolytic processing, as a dimer of two chains linked by disulfide bond(s). Fe cation is required as a cofactor. Characteristic constituent of osteoclasts and some mononuclear preosteoclasts. Preferentially expressed in skeletal tissues.

The protein resides in the lysosome. It carries out the reaction a phosphate monoester + H2O = an alcohol + phosphate. Its function is as follows. May play a role in the process of bone resorption. The osteoclastic trap acts on nucleotide tri- and diphosphates with higher affinity, compared with other substrates. This chain is Tartrate-resistant acid phosphatase type 5 (Acp5), found in Rattus norvegicus (Rat).